A 242-amino-acid polypeptide reads, in one-letter code: Probable ABC transporter ATP-binding protein PEB1C (242 aa).

An ABC transporter domain is found at 2–236 (IELKNVNKYY…PKTERARLFL (235 aa)). An ATP-binding site is contributed by 34-41 (GPSGSGKS).

Belongs to the ABC transporter superfamily.

It is found in the cell inner membrane. Most probably involved, with PEB1, in a binding-protein-dependent transport system for an amino acid. Probably responsible for energy coupling to the transport system. In Campylobacter jejuni subsp. jejuni serotype O:2 (strain ATCC 700819 / NCTC 11168), this protein is Probable ABC transporter ATP-binding protein PEB1C (peb1C).